The chain runs to 1054 residues: Reverse gyrase (1054 aa).

The segment at 1–43 (MIPVVYSNLCPVCGGDLESKEIEKHVCFRKKRSLCLFPEDFLL) adopts an RG N-terminal-type zinc-finger fold. Cys10, Cys13, Cys27, and Cys35 together coordinate Zn(2+). A disulfide bridge connects residues Cys35 and Cys650. ATP contacts are provided by Gln61, Lys84, Thr85, and Ser86. A Helicase ATP-binding domain is found at 65–245 (AKRILRKESF…FRQLLNFDIG (181 aa)). Residues 182–185 (DDVD) carry the DEAD box motif. Residues 352–427 (PSFRVTIEDI…EGEVIFPDLR (76 aa)) are latch region. The segment at 502–1054 (DLIKPALFIV…DLYAEIKSID (553 aa)) is topoisomerase I. One can recognise a Toprim domain in the interval 506–662 (PALFIVESPT…VKRAEFHEVT (157 aa)). Glu512 contributes to the Mg(2+) binding site. The segment at 581-609 (IKRCRDCGYQFTEDRESCPKCGSENVDNS) adopts an RG C-terminal-type zinc-finger fold. 4 residues coordinate Zn(2+): Cys584, Cys587, Cys598, and Cys601. Asp631 provides a ligand contact to Mg(2+). Residues 677–1054 (DENLVKAQVV…DLYAEIKSID (378 aa)) form the Topo IA-type catalytic domain. Tyr809 acts as the O-(5'-phospho-DNA)-tyrosine intermediate in catalysis.

This sequence in the N-terminal section; belongs to the DEAD box helicase family. DDVD subfamily. It in the C-terminal section; belongs to the type IA topoisomerase family. Monomer. Zn(2+) serves as cofactor. It depends on Mg(2+) as a cofactor.

The protein resides in the cytoplasm. It catalyses the reaction ATP + H2O = ADP + phosphate + H(+). Functionally, modifies the topological state of DNA by introducing positive supercoils in an ATP-dependent process, increasing the linking number in steps of +1. Very efficient supercoiling occurs on relaxed DNA with a single-stranded bubble; the minimal bubble is 20 nucleotides (nt) and up to 10 positive supercoils can be introduced into a 3.1 kb plasmid with a 50 nt bubble. Positively supercoils DNA with all (d)NTPS, although it requires about 10-fold more of non-(d)ATP. In the absence of ATP (or at low levels of enzyme), or in the presence of ADP, relaxes negative supercoils. Only relaxes positive supercoils when the substrate contains a bubble. Also promotes strand annealing of complementary ssDNA circles. Binds to single-stranded DNA, transiently cleaves and then rejoins the ends, introducing a positive supercoil in the process. The scissile phosphodiester is attacked by the catalytic tyrosine of the enzyme, resulting in the formation of a DNA-(5'-phosphotyrosyl)-enzyme intermediate. Probably involved in rewinding DNA strands in regions of the chromosome that have opened up to allow replication, transcription, DNA repair and/or for DNA protection. In terms of biological role, in vitro protects DNA against degradation at 90 degrees Celsius, reducing dsDNA breakage about 8-fold; ATP hydrolysis is not necessary, while ADP decreases the protection somewhat. Coats all forms of dsDNA; the DNA is protected against cleavage and transcription. Recognizes nicked DNA and forms a coat at the nicking site, which may help hold DNA in a structure amenable to repair. This Archaeoglobus fulgidus (strain ATCC 49558 / DSM 4304 / JCM 9628 / NBRC 100126 / VC-16) protein is Reverse gyrase.